Here is a 505-residue protein sequence, read N- to C-terminus: Cytochrome P450 monooxygenase iliC (505 aa).

Residues 6-26 form a helical membrane-spanning segment; that stretch reads LIAQHSLTLTIASSVLLVFLL. Cys453 is a binding site for heme.

It belongs to the cytochrome P450 family. Heme serves as cofactor.

The protein localises to the membrane. The catalysed reaction is (3E,5S)-3-[(2E,4E,8S,10E,12Z)-1-hydroxy-4,8-dimethyltetradeca-2,4,10,12-tetraen-1-ylidene]-5-[(4-hydroxyphenyl)methyl]pyrrolidine-2,4-dione + reduced [NADPH--hemoprotein reductase] + O2 = 3-[(2E,4E,8S,10E,12Z)-4,8-dimethyltetradeca-2,4,10,12-tetraenoyl]-4-hydroxy-5-(4-hydroxyphenyl)-1,2-dihydropyridin-2-one + oxidized [NADPH--hemoprotein reductase] + 2 H2O. It functions in the pathway mycotoxin biosynthesis. Cytochrome P450 monooxygenase; part of the gene cluster that mediates the biosynthesis of ilicicolin H, a 4-hydroxy-2-pyridonealkaloid that has potent and broad antifungal activities by inhibiting the mitochondrial respiration chain. IliC catalyzes the ring expansion of the tetramate intermediate to the acyclic 2-pyridone intermediate that contains the trans bis-diene chain. The biosynthesis of ilicicolin H starts with formation of the tetramic acid by the hybrid PKS-NRPS synthetase iliA with the partnering trans-enoyl reductase iliB since iliA lacks a designated enoylreductase (ER) domain. The cytochrome P450 monooxygenase iliC then catalyzes the ring expansion of the tetramate to the acyclic 2-pyridone. The pericyclase iliD further converts the acyclic 2-pyridone into 8-epi-ilicicolin H. 8-epi-ilicicolin H might then spontaneously convert to ilicicolin H since ilicicolin H is produced in the absence of the epimerase iliE, in contrast to what was observed for the Talaromyces variabilis ilicolin H biosynthetic pathway. This chain is Cytochrome P450 monooxygenase iliC, found in Neonectria sp. (strain DH2).